A 144-amino-acid polypeptide reads, in one-letter code: (R)-specific enoyl-CoA hydratase (144 aa).

Residues 13–128 (DIKEGQSASL…TFRTTCTVAG (116 aa)) form the MaoC-like domain.

As to quaternary structure, homotetramer.

It catalyses the reaction a (3R)-3-hydroxyacyl-CoA = a (2E)-enoyl-CoA + H2O. In terms of biological role, catalyzes the hydration of trans-2-enoyl-CoAs with a chain-length of 4-6 carbon atoms, forming the corresponding (3R)-3-hydroxyacyl-CoAs, which can then be utilized for the production of polyhydroxyalkanoates (PHA) polymers. Cannot use trans-2,3-octenoyl-CoA as substrate. This is (R)-specific enoyl-CoA hydratase from Rhodospirillum rubrum (strain ATCC 11170 / ATH 1.1.1 / DSM 467 / LMG 4362 / NCIMB 8255 / S1).